The primary structure comprises 372 residues: Cyclic GMP-AMP synthase-like receptor (372 aa).

Residue Thr-68 coordinates GTP. Residues Ser-70 and 82–84 (EFD) each bind ATP. 3 residues coordinate Mg(2+): Glu-82, Asp-84, and Asp-190. GTP-binding positions include Asp-190 and 236–243 (LVCAPYWE). ATP contacts are provided by residues 240 to 243 (PYWE), Lys-261, and 274 to 278 (SYTIK).

This sequence belongs to the mab-21 family. Mg(2+) serves as cofactor. The cofactor is Mn(2+).

It carries out the reaction GTP + ATP = 3',2'-cGAMP + 2 diphosphate. The enzyme catalyses GTP + ATP = pppA(2'-5')pG + diphosphate. The catalysed reaction is pppA(2'-5')pG = 3',2'-cGAMP + diphosphate. Its activity is regulated as follows. The enzyme activity is specifically activated by double-stranded RNA (dsRNA). Nucleotidyltransferase that catalyzes the formation of cyclic GMP-AMP (3',2'-cGAMP) from ATP and GTP and plays a key role in innate immunity. Synthesizes 3',2'-cGAMP in a two-step reaction through production of the linear intermediate pppA(2'-5')pG. Acts as a key sensor of double-stranded RNA (dsRNA), the presence of dsRNA in the cytoplasm being a danger signal that triggers the immune responses. Directly binds dsRNA longer than 15 bp, activating the nucleotidyltransferase activity, leading to synthesis of 3',2'-cGAMP, a second messenger that binds to and activates Sting, thereby triggering the antiviral immune response via activation of the NF-kappa-B transcription factor Rel (Relish). This chain is Cyclic GMP-AMP synthase-like receptor, found in Drosophila eugracilis (Fruit fly).